Reading from the N-terminus, the 681-residue chain is MSKTFLRPKVSSTKVTDWVDPSFDDFLECRDVSTITATSLGVNNSSHRRKNGPSTLESSRFPARKRGNLSSLEQIYGLENSKEYLSENEPWVDKYKPETQHELAVHKKKIEEVETWLKAQVLERQPKQGGSILLITGPPGCGKTTTIKILSKEHGIQVQEWINPVLPDFQKDDFKGMFNTESSFHMFPYQSQIAVFKEFLLRATKYNKLQMLGDDLRTDKKIILVEDLPNQFYRDSHTLHEVLRKYVRIGRCPLIFIISDSLSGDNNQRLLFPKEIQEECSISNISFNPVAPTIMMKFLNRIVTIEANKNGGKITVPDKTSLELLCQGCSGDIRSAINSLQFSSSKGENNLWPRKKGMSLKSDAVLSKSKQRKKPDRVFENQEVQAIGGKDVSLFLFRALGKILYCKRASLTELDSPRLPSHLSEYERDTLLVEPEEVVEMSHMPGDLFNLYLHQNYIDFFMEIDDIVRASEFLSFADILSGDWNTRSLLREYSTSIATRGVMHSNKARGYAHCQGGGSSFRPLHKPQWFLINKKYRENYLAAKALFPDFCLPALCLQTQLLPYLALLTIPMRNQAQISFIQDIGRLPLKRHFGRLKMEALTDREHGMIDPDSGDEAQLNGGHSAEESLGEPTQATALETWSLPLSQNSASELPASQPQPFSAQGDMEENIIIEDYESDGT.

The short motif at 17 to 25 is the RAD1-binding motif element; the sequence is DWVDPSFDD. Residues 42-63 form a disordered region; it reads VNNSSHRRKNGPSTLESSRFPA. Residue threonine 55 is modified to Phosphothreonine. Residues serine 71 and serine 86 each carry the phosphoserine modification. An ATP-binding site is contributed by 137–144; it reads GPPGCGKT. Serine 359 bears the Phosphoserine mark. The segment at 432–681 is interaction with MCM7; it reads LVEPEEVVEM…IIEDYESDGT (250 aa). The interval 606-681 is disordered; that stretch reads HGMIDPDSGD…IIEDYESDGT (76 aa). Polar residues predominate over residues 631 to 662; the sequence is EPTQATALETWSLPLSQNSASELPASQPQPFS. At threonine 633 the chain carries Phosphothreonine. Phosphoserine occurs at positions 646 and 656. Acidic residues predominate over residues 666–681; sequence DMEENIIIEDYESDGT.

Belongs to the rad17/RAD24 family. As to quaternary structure, part of a DNA-binding complex containing RFC2, RFC3, RFC4 and RFC5. Interacts with RAD1 and RAD9 within the 9-1-1 (RAD1-RAD9-HUS1) complex. Interacts with RAD9B, POLE, SNU13 and MCM7. DNA damage promotes interaction with ATR or ATM and disrupts interaction with the 9-1-1 (RAD1-RAD9-HUS1) complex. Interacts (when phosphorylated) with NBN; promoting recruitment of the MRN complex to DNA damage sites. In terms of processing, phosphorylated. Phosphorylation on Ser-646 and Ser-656 is cell cycle-regulated, enhanced by genotoxic stress, and required for activation of checkpoint signaling. Phosphorylation is mediated by ATR upon UV or replication arrest, whereas it may be mediated both by ATR and ATM upon ionizing radiation. Phosphorylation on both sites is required for interaction with RAD1 but dispensable for interaction with RFC3 or RFC4. Phosphorylation at Thr-633 by ATM in response to DNA damage promotes interaction with NBN and recruitment of the MRN complex to DNA damage sites.

Its subcellular location is the nucleus. It is found in the chromosome. Functionally, essential for sustained cell growth, maintenance of chromosomal stability, and ATR-dependent checkpoint activation upon DNA damage. Has a weak ATPase activity required for binding to chromatin. Participates in the recruitment of the 9-1-1 (RAD1-RAD9-HUS1) complex and RHNO1 onto chromatin, and in CHEK1 activation. Involved in homologous recombination by mediating recruitment of the MRN complex to DNA damage sites. May also serve as a sensor of DNA replication progression. In Pongo abelii (Sumatran orangutan), this protein is Cell cycle checkpoint protein RAD17 (RAD17).